Here is a 432-residue protein sequence, read N- to C-terminus: 3-phosphoshikimate 1-carboxyvinyltransferase (432 aa).

Positions 23, 24, and 28 each coordinate 3-phosphoshikimate. Lysine 23 lines the phosphoenolpyruvate pocket. Glycine 95 and arginine 123 together coordinate phosphoenolpyruvate. 3-phosphoshikimate is bound by residues serine 167, glutamine 169, aspartate 317, and lysine 344. Glutamine 169 contributes to the phosphoenolpyruvate binding site. Aspartate 317 serves as the catalytic Proton acceptor. Phosphoenolpyruvate contacts are provided by arginine 348 and arginine 390.

It belongs to the EPSP synthase family. In terms of assembly, monomer.

It is found in the cytoplasm. It carries out the reaction 3-phosphoshikimate + phosphoenolpyruvate = 5-O-(1-carboxyvinyl)-3-phosphoshikimate + phosphate. It participates in metabolic intermediate biosynthesis; chorismate biosynthesis; chorismate from D-erythrose 4-phosphate and phosphoenolpyruvate: step 6/7. In terms of biological role, catalyzes the transfer of the enolpyruvyl moiety of phosphoenolpyruvate (PEP) to the 5-hydroxyl of shikimate-3-phosphate (S3P) to produce enolpyruvyl shikimate-3-phosphate and inorganic phosphate. The chain is 3-phosphoshikimate 1-carboxyvinyltransferase from Staphylococcus aureus (strain JH9).